Here is a 727-residue protein sequence, read N- to C-terminus: Synaptic vesicle glycoprotein 2C (727 aa).

The tract at residues 1-57 is interaction with SYT1; it reads MEDSYKDRTSLMKGAKDIAKEVKKQTVKKVNQAVDRAQDEYTQRSYSRFQDEEDDDD. Topologically, residues 1-154 are cytoplasmic; the sequence is MEDSYKDRTS…CGHGRFQWAL (154 aa). The interval 22–128 is disordered; sequence VKKQTVKKVN…DRRELESERR (107 aa). Phosphoserine is present on residues Ser-75 and Ser-76. A Phosphothreonine modification is found at Thr-79. A compositionally biased stretch (basic and acidic residues) spans 113-128; it reads KGDEYKDRRELESERR. The chain crosses the membrane as a helical span at residues 155–175; that stretch reads FFVLGMALMADGVEVFVVGFV. Residues 176 to 191 are Extracellular-facing; sequence LPSAETDLCIPNSGSG. The chain crosses the membrane as a helical span at residues 192–212; it reads WLGSIVYLGMMVGAFFWGGLA. Residues 213-226 are Cytoplasmic-facing; sequence DKVGRKQSLLICMS. Residues 227-247 traverse the membrane as a helical segment; the sequence is VNGFFAFLSSFVQGYGFFLVC. Position 248 (Arg-248) is a topological domain, extracellular. A helical transmembrane segment spans residues 249 to 269; the sequence is LLSGFGIGGAIPTVFSYFAEV. At 270-280 the chain is on the cytoplasmic side; that stretch reads LAREKRGEHLS. Residues 281 to 301 traverse the membrane as a helical segment; it reads WLCMFWMIGGIYASAMAWAII. Residues 302 to 320 are Extracellular-facing; that stretch reads PHYGWSFSMGSAYQFHSWR. A helical membrane pass occupies residues 321-341; sequence VFVIVCALPCVSSVVALTFMP. The Cytoplasmic portion of the chain corresponds to 342 to 437; the sequence is ESPRFLLEVG…PVRENTIKLT (96 aa). Residues 438–458 traverse the membrane as a helical segment; that stretch reads IVWFTLSFGYYGLSVWFPDVI. Residues 459-578 are Extracellular-facing; the sequence is KHLQSDEYAL…CQITFDDDYS (120 aa). Tyr-466 bears the Phosphotyrosine mark. Asn-480, Asn-484, Asn-534, Asn-559, and Asn-565 each carry an N-linked (GlcNAc...) asparagine glycan. Residues 579 to 599 form a helical membrane-spanning segment; the sequence is AYWIYFVNFLGTLAVLPGNIV. Residues 600–609 are Cytoplasmic-facing; the sequence is SALLMDRIGR. Residues 610–630 traverse the membrane as a helical segment; it reads LTMLGGSMVLSGISCFFLWFG. The Extracellular segment spans residues 631–636; sequence TSESMM. A helical transmembrane segment spans residues 637–657; it reads IGMLCLYNGLTISAWNSLDVV. Topologically, residues 658–670 are cytoplasmic; it reads TVELYPTDRRATG. A helical transmembrane segment spans residues 671-693; it reads FGFLNALCKAAAVLGNLIFGSLV. Topologically, residues 694–697 are extracellular; the sequence is SITK. Residues 698–716 form a helical membrane-spanning segment; the sequence is AIPILLASTVLVCGGLVGL. Topologically, residues 717-727 are cytoplasmic; the sequence is RLPDTRTQVLM.

The protein belongs to the major facilitator superfamily. In terms of assembly, interacts with SYT1 in a calcium-dependent manner. (Microbial infection) Interacts with C.botulinum neurotoxin type A (BoNT/A, botA). As to quaternary structure, (Microbial infection) Interacts with C.botulinum neurotoxin type D (BoNT/D, botD). Post-translationally, N-glycosylated. Expressed in specific subsets of conventional synapses in the retina (at protein level). Expressed in diaphragm motor nerve terminals (at protein level). Expressed in a subset of hippocampus neurons (at protein level).

Its subcellular location is the cytoplasmic vesicle. The protein resides in the secretory vesicle. The protein localises to the synaptic vesicle membrane. Plays a role in the control of regulated secretion in neural and endocrine cells, enhancing selectively low-frequency neurotransmission. Positively regulates vesicle fusion by maintaining the readily releasable pool of secretory vesicles. Its function is as follows. (Microbial infection) Receptor for C.botulinum neurotoxin type A (BoNT/A, botA); the toxin binds Sv2c via extracellular loop 4. In terms of biological role, (Microbial infection) Possible receptor for C.botulinum neurotoxin type D (BoNT/D, botD). This Mus musculus (Mouse) protein is Synaptic vesicle glycoprotein 2C (Sv2c).